The following is a 334-amino-acid chain: Ornithine carbamoyltransferase (334 aa).

Residues 57 to 60 (STRT), Q84, R108, and 135 to 138 (HPTQ) each bind carbamoyl phosphate. Residues N169, D233, and 237–238 (SM) contribute to the L-ornithine site. Carbamoyl phosphate-binding positions include 275-276 (CL) and R320.

This sequence belongs to the aspartate/ornithine carbamoyltransferase superfamily. OTCase family.

It is found in the cytoplasm. The catalysed reaction is carbamoyl phosphate + L-ornithine = L-citrulline + phosphate + H(+). It functions in the pathway amino-acid biosynthesis; L-arginine biosynthesis; L-arginine from L-ornithine and carbamoyl phosphate: step 1/3. Functionally, reversibly catalyzes the transfer of the carbamoyl group from carbamoyl phosphate (CP) to the N(epsilon) atom of ornithine (ORN) to produce L-citrulline. The sequence is that of Ornithine carbamoyltransferase (argF) from Pasteurella multocida (strain Pm70).